The primary structure comprises 142 residues: Putative pre-16S rRNA nuclease (142 aa).

This sequence belongs to the YqgF nuclease family.

It localises to the cytoplasm. In terms of biological role, could be a nuclease involved in processing of the 5'-end of pre-16S rRNA. This is Putative pre-16S rRNA nuclease from Ruminiclostridium cellulolyticum (strain ATCC 35319 / DSM 5812 / JCM 6584 / H10) (Clostridium cellulolyticum).